The sequence spans 399 residues: La protein 2 (399 aa).

The region spanning 3–106 (SSFNEETAKK…GRGTKLSKPE (104 aa)) is the HTH La-type RNA-binding domain. An RRM domain is found at 115 to 192 (RTLAASPFEY…ADLVLIPKSD (78 aa)). Residues 269–399 (SLCKDNTDQL…QPTKKARKEP (131 aa)) enclose the xRRM domain. Positions 367-399 (AELEGGKEGHKKEKGKDECFENVQPTKKARKEP) are disordered. The span at 370–385 (EGGKEGHKKEKGKDEC) shows a compositional bias: basic and acidic residues.

In terms of tissue distribution, expressed ubiquitously (at protein level).

It localises to the nucleus. The protein localises to the nucleoplasm. Its subcellular location is the nucleolus. Functionally, binds to the 3' poly(U) terminus of nascent RNA polymerase III transcripts, protecting them from exonuclease digestion and facilitating their folding and maturation. The polypeptide is La protein 2 (LA2) (Arabidopsis thaliana (Mouse-ear cress)).